The following is a 180-amino-acid chain: Peptidyl-tRNA hydrolase (180 aa).

Tyrosine 13 is a binding site for tRNA. Catalysis depends on histidine 18, which acts as the Proton acceptor. Residues tyrosine 58, asparagine 60, and asparagine 100 each contribute to the tRNA site.

The protein belongs to the PTH family. Monomer.

It is found in the cytoplasm. The enzyme catalyses an N-acyl-L-alpha-aminoacyl-tRNA + H2O = an N-acyl-L-amino acid + a tRNA + H(+). Its function is as follows. Hydrolyzes ribosome-free peptidyl-tRNAs (with 1 or more amino acids incorporated), which drop off the ribosome during protein synthesis, or as a result of ribosome stalling. Functionally, catalyzes the release of premature peptidyl moieties from peptidyl-tRNA molecules trapped in stalled 50S ribosomal subunits, and thus maintains levels of free tRNAs and 50S ribosomes. The sequence is that of Peptidyl-tRNA hydrolase from Fervidobacterium nodosum (strain ATCC 35602 / DSM 5306 / Rt17-B1).